The primary structure comprises 449 residues: Glutamyl-tRNA reductase (449 aa).

Residues 49-52 (TCNR), serine 107, 112-114 (EPQ), and glutamine 118 contribute to the substrate site. Cysteine 50 functions as the Nucleophile in the catalytic mechanism. 187–192 (GAGETI) serves as a coordination point for NADP(+). The interval 418–449 (QLVERSSEGDDSQQAGADGGAARGDRRAAGGS) is disordered. Over residues 440 to 449 (RGDRRAAGGS) the composition is skewed to basic and acidic residues.

Belongs to the glutamyl-tRNA reductase family. In terms of assembly, homodimer.

It carries out the reaction (S)-4-amino-5-oxopentanoate + tRNA(Glu) + NADP(+) = L-glutamyl-tRNA(Glu) + NADPH + H(+). It functions in the pathway porphyrin-containing compound metabolism; protoporphyrin-IX biosynthesis; 5-aminolevulinate from L-glutamyl-tRNA(Glu): step 1/2. Functionally, catalyzes the NADPH-dependent reduction of glutamyl-tRNA(Glu) to glutamate 1-semialdehyde (GSA). In Halorhodospira halophila (strain DSM 244 / SL1) (Ectothiorhodospira halophila (strain DSM 244 / SL1)), this protein is Glutamyl-tRNA reductase.